A 349-amino-acid polypeptide reads, in one-letter code: MKVLGLETSCDETGLAIFDSEQINSENKGLLGQVLYSQIELHALYGGVVPELASRDHIRKLVPLFNELLAQCNISKDEIDAIAYTKGPGLIGALMTGALFGRSLAYGLDIPAIGIHHMEGHLLAPLMGLNPPAFPFVSLLVSGGHTLLIAAHGIGQYEILGESIDDAAGECFDKAAKMLGLPYPGGPNIAKLAENGNPNAYSLPRPMLHRGLDFSFSGMKTAVHNLIKDTDGSGNGSDSDPQVRADIAASFQHAVVDTLVKKCVKALKQVDMSRLVIAGGVSANSHLRETLERELAKINATVHYAPPALCTDNGAMIAYAGYERLQAGQSDDLAVSCVPRWPMTELPAV.

Residues His117 and His121 each coordinate Fe cation. Residues Leu140–Gly144, Asp173, Gly186, and Asn284 each bind substrate. Position 312 (Asp312) interacts with Fe cation.

The protein belongs to the KAE1 / TsaD family. Requires Fe(2+) as cofactor.

Its subcellular location is the cytoplasm. The enzyme catalyses L-threonylcarbamoyladenylate + adenosine(37) in tRNA = N(6)-L-threonylcarbamoyladenosine(37) in tRNA + AMP + H(+). Its function is as follows. Required for the formation of a threonylcarbamoyl group on adenosine at position 37 (t(6)A37) in tRNAs that read codons beginning with adenine. Is involved in the transfer of the threonylcarbamoyl moiety of threonylcarbamoyl-AMP (TC-AMP) to the N6 group of A37, together with TsaE and TsaB. TsaD likely plays a direct catalytic role in this reaction. The polypeptide is tRNA N6-adenosine threonylcarbamoyltransferase (Psychrobacter arcticus (strain DSM 17307 / VKM B-2377 / 273-4)).